The following is a 96-amino-acid chain: Myticin-B (96 aa).

The N-terminal stretch at Met-1 to Ala-20 is a signal peptide. The propeptide at Val-61–Leu-96 is removed in mature form.

Post-translationally, contains four disulfide bonds. Hemocytes.

Its subcellular location is the secreted. In terms of biological role, bacteriolytic activity against Gram-positive bacteria M.luteus, B.megaterium and A.viridans and Gram-negative bacteria E.coli D31. Possesses antifungal activity against F.oxysporum. This is Myticin-B from Mytilus galloprovincialis (Mediterranean mussel).